We begin with the raw amino-acid sequence, 1475 residues long: Sex-determining transformer protein 2 (1475 aa).

The signal sequence occupies residues 1–31 (MKLKYNKLLVSVVIVTFVTFGLLLAECFGKS). A run of 11 helical transmembrane segments spans residues 446–466 (TIHF…IFVW), 474–494 (AFMF…VCST), 496–516 (GVIV…LANL), 589–609 (WGCT…FIDS), 737–757 (GVIL…LLFI), 902–922 (AVGV…LFAF), 928–948 (AGIF…TPTI), 952–972 (FLFS…VHLF), 979–999 (IYTN…FCAL), 1034–1054 (IAQF…ICSI), and 1060–1080 (IFFV…FNSI). Residues 1133-1273 (EFSIKRSSPP…RERNLMNKRS (141 aa)) are interaction with fem-3. 2 disordered regions span residues 1142 to 1194 (PCRY…GDNT) and 1267 to 1330 (NLMN…VDEP). The segment covering 1178–1188 (RSPKTGNKRVR) has biased composition (basic residues). Over residues 1276–1310 (QRRESRNIEKMKKSQENLDKEKSEEKISESKKNQD) the composition is skewed to basic and acidic residues. The tract at residues 1392-1413 (CEDIYWTHRTGQLPPGLQVPRR) is MX regulatory domain; required for tra-1 binding. A disordered region spans residues 1424 to 1475 (TPPPEDLNWVPPAESPPIPIPQQAFDLLEERRRNHREQQDEAREGDLSDPEV). Residues 1451 to 1469 (LEERRRNHREQQDEAREGD) are compositionally biased toward basic and acidic residues.

Interacts with tra-1 and fem-3. In terms of processing, undergoes cleavage by tra-3 to produce a feminizing carboxy-terminal isoform Tra-2B. As to expression, somatic and germline tissues. Isoform Tra-2B is specific to oocytes.

It is found in the membrane. In terms of biological role, plays a major role in controlling sexual cell fates. Promotes female development in XX animals where it sequesters one or more of the FEM proteins to the membrane thereby freeing the tra-1 protein (a putative transcription factor) to enter the nucleus and promote female development. In XO animals it acts as a receptor for her-1 which prevents it from binding to FEM proteins thereby repressing the activity of tra-1. Negatively regulates male development when bound to fem-3 and is required together with tra-1 for promoting spermatogenesis. Also required for feminizing tra-3 activity. The polypeptide is Sex-determining transformer protein 2 (tra-2) (Caenorhabditis elegans).